Here is a 204-residue protein sequence, read N- to C-terminus: Methylthioribulose-1-phosphate dehydratase (204 aa).

Histidine 95 and histidine 97 together coordinate Zn(2+).

It belongs to the aldolase class II family. MtnB subfamily. Zn(2+) is required as a cofactor.

It catalyses the reaction 5-(methylsulfanyl)-D-ribulose 1-phosphate = 5-methylsulfanyl-2,3-dioxopentyl phosphate + H2O. It functions in the pathway amino-acid biosynthesis; L-methionine biosynthesis via salvage pathway; L-methionine from S-methyl-5-thio-alpha-D-ribose 1-phosphate: step 2/6. Catalyzes the dehydration of methylthioribulose-1-phosphate (MTRu-1-P) into 2,3-diketo-5-methylthiopentyl-1-phosphate (DK-MTP-1-P). The sequence is that of Methylthioribulose-1-phosphate dehydratase from Parvibaculum lavamentivorans (strain DS-1 / DSM 13023 / NCIMB 13966).